An 81-amino-acid polypeptide reads, in one-letter code: MGQSSSSGRGGICGLCKRYNELVTCNGETVALNSEFFEDFDFDENVTEDADKSTQRRPRVIDVTPKRKPSGKSSHSKCAKC.

G2 carries N-myristoyl glycine; by host lipidation. Positions 22-23 (LV) match the Di-leucine-like internalization motif motif. An asp/Glu-rich (acidic) region spans residues 41-47 (DFDENVT). The segment at 47–81 (TEDADKSTQRRPRVIDVTPKRKPSGKSSHSKCAKC) is disordered. Residues 66–81 (KRKPSGKSSHSKCAKC) are compositionally biased toward basic residues.

It belongs to the herpesviridae cytoplasmic envelopment protein 3 family. In terms of assembly, interacts with cytoplasmic envelopment protein 2; this interaction is essential for the proper localization of each protein to the assembly complex and thus for the production of infectious virus. In terms of processing, myristoylation and palmitoylation (probably on one or more of the nearby cysteines at the N-terminus) enable membrane-binding and Golgi apparatus-specific targeting and are essential for efficient packaging. Post-translationally, phosphorylated. Phosphorylation does not seem to be required for recycling to the host Golgi apparatus. Packaging is selective for underphosphorylated forms.

The protein resides in the virion tegument. The protein localises to the virion membrane. It localises to the host cell membrane. Its subcellular location is the host Golgi apparatus membrane. Functionally, plays an important role in the cytoplasmic envelopment of tegument proteins and capsids during the assembly and egress processes. Also participates in viral entry at the fusion step probably by regulating the core fusion machinery. The sequence is that of Cytoplasmic envelopment protein 3 from Homo sapiens (Human).